Reading from the N-terminus, the 326-residue chain is MSKSNQKIASIEQLSNNEGIISALAFDQRGALKRMMAKHQTEEPTVAQIEQLKVLVAEELTQYASSILLDPEYGLPASDARNKDCGLLLAYEKTGYDVNAKGRLPDCLVEWSAKRLKEQGANAVKFLLYYDVDDAEEINIQKKAYIERIGSECVAEDIPFFLEVLTYDDNIPDNGSVEFAKVKPRKVNEAMKLFSEPRFNVDVLKVEVPVNMKYVEGFAEGEVVYTKEEAAQHFKDQDAATHLPYIYLSAGVSAELFQETLKFAHEAGAKFNGVLCGRATWSGAVQVYIEQGEDAAREWLRTTGFKNIDDLNKVLKDTATSWKQRK.

Belongs to the aldolase LacD family.

The enzyme catalyses D-tagatofuranose 1,6-bisphosphate = D-glyceraldehyde 3-phosphate + dihydroxyacetone phosphate. It functions in the pathway carbohydrate metabolism; D-tagatose 6-phosphate degradation; D-glyceraldehyde 3-phosphate and glycerone phosphate from D-tagatose 6-phosphate: step 2/2. The protein is Tagatose 1,6-diphosphate aldolase of Staphylococcus aureus (strain Mu3 / ATCC 700698).